The primary structure comprises 1325 residues: Bile salt export pump (1325 aa).

The Cytoplasmic portion of the chain corresponds to 1–62; it reads MSDAVILRSV…FSSTTDIWLM (62 aa). In terms of domain architecture, ABC transmembrane type-1 1 spans 62 to 385; that stretch reads MFVGSLCAFL…ASSCLEAFAT (324 aa). The helical transmembrane segment at 63–83 threads the bilayer; that stretch reads FVGSLCAFLHGLSHPGVLLIF. At 84-147 the chain is on the extracellular side; it reads GTMTDVFIAY…MIKFASYYAG (64 aa). Residues asparagine 109, asparagine 116, asparagine 122, and asparagine 125 are each glycosylated (N-linked (GlcNAc...) asparagine). Residues 148-168 traverse the membrane as a helical segment; the sequence is IALLVLITGYIQICFWVIAAA. Topologically, residues 169–240 are cytoplasmic; sequence RQIQKMRKIS…FLLGFYQGWK (72 aa). The chain crosses the membrane as a helical span at residues 241-261; that stretch reads LTLVIISVSPLIGIGAAIIGL. The Extracellular segment spans residues 262–319; the sequence is SVSKFTDYELKAYAKAGSVADEVISSMRTVAAFGGEKKEVERYEKNLVFAQRWGIRKG. A helical transmembrane segment spans residues 320–340; the sequence is IVMGFFTGFMWCLIFLCYALA. Over 341-353 the chain is Cytoplasmic; it reads FWYGSKLVLEDGE. A helical transmembrane segment spans residues 354–374; it reads YTAGTLVQIFLSILLGALNLG. N-linked (GlcNAc...) asparagine glycosylation is found at asparagine 375, asparagine 424, and asparagine 440. At 375–759 the chain is on the extracellular side; that stretch reads NASSCLEAFA…KFNAPEWPYM (385 aa). Residues 420-656 enclose the ABC transporter 1 domain; that stretch reads IEFHNVTFHY…KGVYFTLVTL (237 aa). 455–462 is an ATP binding site; that stretch reads GSSGSGKS. Asparagine 591 is a glycosylation site (N-linked (GlcNAc...) asparagine). The ABC transmembrane type-1 2 domain occupies 759 to 1047; it reads MLFGAVGAAV…ASSYTPSYAK (289 aa). Residues 760 to 780 form a helical membrane-spanning segment; sequence LFGAVGAAVNGSVTPLYAFLF. Residues 781-798 lie on the Cytoplasmic side of the membrane; that stretch reads SQILGTFSLPDKEEQRSQ. Residues 799–819 traverse the membrane as a helical segment; sequence INGVCLLFVAVGCVSLCTQFL. Topologically, residues 820–894 are extracellular; the sequence is QGYAFAKSGE…NSFTNVTVAM (75 aa). N-linked (GlcNAc...) asparagine glycosylation occurs at asparagine 889. The chain crosses the membrane as a helical span at residues 895–915; the sequence is IIAFFFSWKLSLVIMCFFPFL. Topologically, residues 916–983 are cytoplasmic; sequence ALSGALQTRM…PFKTAFRKAN (68 aa). A helical transmembrane segment spans residues 984 to 1004; it reads VYGFCFGFSQCIVFVANSASY. Topologically, residues 1005–1014 are extracellular; that stretch reads RYGGYLIPNE. The chain crosses the membrane as a helical span at residues 1015–1035; that stretch reads GLHFSYVFRVISSVVLSATAL. Residues 1036 to 1325 are Cytoplasmic-facing; sequence GRASSYTPSY…KLVTTGAPIS (290 aa). The region spanning 1082-1320 is the ABC transporter 2 domain; that stretch reads VDFVDCKFTY…KGAYYKLVTT (239 aa). 1117–1124 provides a ligand contact to ATP; the sequence is GSSGCGKS.

It belongs to the ABC transporter superfamily. ABCB family. Multidrug resistance exporter (TC 3.A.1.201) subfamily. In terms of assembly, interacts with HAX1. Interacts with the adapter protein complex 2 (AP-2) throught AP2A2 or AP2A1; this interaction regulates cell membrane expression of ABCB11 through its internalization in a clathrin-dependent manner and its subsequent degradation. In terms of processing, N-glycosylated. Ubiquitinated; short-chain ubiquitination regulates cell-Surface expression of ABCB11. As to expression, liver.

The protein resides in the apical cell membrane. The protein localises to the recycling endosome membrane. It localises to the endosome. It is found in the cell membrane. The catalysed reaction is cholate(in) + ATP + H2O = cholate(out) + ADP + phosphate + H(+). It carries out the reaction taurocholate(in) + ATP + H2O = taurocholate(out) + ADP + phosphate + H(+). The enzyme catalyses glycocholate(in) + ATP + H2O = glycocholate(out) + ADP + phosphate + H(+). It catalyses the reaction glycochenodeoxycholate(in) + ATP + H2O = glycochenodeoxycholate(out) + ADP + phosphate + H(+). The catalysed reaction is taurochenodeoxycholate(in) + ATP + H2O = taurochenodeoxycholate(out) + ADP + phosphate + H(+). It carries out the reaction glycoursodeoxycholate(in) + ATP + H2O = glycoursodeoxycholate(out) + ADP + phosphate + H(+). The enzyme catalyses tauroursodeoxycholate(in) + ATP + H2O = tauroursodeoxycholate(out) + ADP + phosphate + H(+). It catalyses the reaction taurodeoxycholate(in) + ATP + H2O = taurodeoxycholate(out) + ADP + phosphate + H(+). The catalysed reaction is taurolithocholate 3-sulfate(in) + ATP + H2O = taurolithocholate 3-sulfate(out) + ADP + phosphate + H(+). It carries out the reaction pravastatin(in) + ATP + H2O = pravastatin(out) + ADP + phosphate + H(+). With respect to regulation, the uptake of taurocholate is inhibited by taurolithocholate sulfate with an IC(50) of 9 uM. Pravastatin competitively inhibits the transport of taurocholic acid. Cyclosporin A, glibenclamide, rifampicin and troglitazonestrongly competitively inhibit the transport activity of taurocholate. The canalicular transport activity of taurocholate is strongly dependent on canalicular membrane cholesterol content. The uptake of taurocholate is increased by short- and medium-chain fatty acids. Cholesterol increases transport capacity of taurocholate without affecting the affinity for the substrate. In terms of biological role, catalyzes the transport of the major hydrophobic bile salts, such as taurine and glycine-conjugated cholic acid across the canalicular membrane of hepatocytes in an ATP-dependent manner, therefore participates in hepatic bile acid homeostasis and consequently to lipid homeostasis through regulation of biliary lipid secretion in a bile salts dependent manner. Transports taurine-conjugated bile salts more rapidly than glycine-conjugated bile salts. Also transports non-bile acid compounds, such as pravastatin and fexofenadine in an ATP-dependent manner and may be involved in their biliary excretion. The chain is Bile salt export pump from Canis lupus familiaris (Dog).